The sequence spans 288 residues: ATP synthase gamma chain (288 aa).

This sequence belongs to the ATPase gamma chain family. F-type ATPases have 2 components, CF(1) - the catalytic core - and CF(0) - the membrane proton channel. CF(1) has five subunits: alpha(3), beta(3), gamma(1), delta(1), epsilon(1). CF(0) has three main subunits: a, b and c.

The protein resides in the cell inner membrane. Produces ATP from ADP in the presence of a proton gradient across the membrane. The gamma chain is believed to be important in regulating ATPase activity and the flow of protons through the CF(0) complex. The sequence is that of ATP synthase gamma chain from Legionella pneumophila (strain Paris).